We begin with the raw amino-acid sequence, 316 residues long: Nucleotide-binding protein NFA_35930 (316 aa).

32-39 lines the ATP pocket; that stretch reads GLSGAGRG. Residue 83–86 coordinates GTP; that stretch reads DVRS.

It belongs to the RapZ-like family.

Displays ATPase and GTPase activities. The protein is Nucleotide-binding protein NFA_35930 of Nocardia farcinica (strain IFM 10152).